Consider the following 138-residue polypeptide: L-ectoine synthase (138 aa).

The protein belongs to the ectoine synthase family.

The enzyme catalyses (2S)-4-acetamido-2-aminobutanoate = L-ectoine + H2O. It functions in the pathway amine and polyamine biosynthesis; ectoine biosynthesis; L-ectoine from L-aspartate 4-semialdehyde: step 3/3. Its function is as follows. Catalyzes the circularization of gamma-N-acetyl-alpha,gamma-diaminobutyric acid (ADABA) to ectoine (1,4,5,6-tetrahydro-2-methyl-4-pyrimidine carboxylic acid), which is an excellent osmoprotectant. This is L-ectoine synthase from Vibrio cholerae serotype O1 (strain ATCC 39541 / Classical Ogawa 395 / O395).